The sequence spans 308 residues: Glutaminase (308 aa).

S66, N117, E161, N168, Y192, Y244, and V262 together coordinate substrate.

The protein belongs to the glutaminase family. Homotetramer.

The catalysed reaction is L-glutamine + H2O = L-glutamate + NH4(+). The polypeptide is Glutaminase (Enterobacter sp. (strain 638)).